Consider the following 126-residue polypeptide: Protein ApaG (126 aa).

The 125-residue stretch at 2–126 folds into the ApaG domain; that stretch reads SDTQHQVNVR…FRLAVPGALH (125 aa).

The sequence is that of Protein ApaG from Pseudomonas aeruginosa (strain LESB58).